The primary structure comprises 603 residues: Autophagy-related protein 13a (603 aa).

Phosphoserine is present on S248. 2 disordered regions span residues 258 to 477 (PSPG…DDLD) and 498 to 518 (SHSL…PLGR). Positions 301–315 (ATPNQSFSPAQSHQL) are enriched in polar residues. A compositionally biased stretch (basic and acidic residues) spans 320–331 (HDFHWSRTDAFG). 2 stretches are compositionally biased toward polar residues: residues 371-386 (IPSS…SNFS) and 419-437 (SSRS…PTQK). A compositionally biased stretch (low complexity) spans 453-473 (LSSSDSPRFAFSRSPSRLSSQ).

Belongs to the ATG13 family. Plant subfamily. As to quaternary structure, interacts with ATG1A. Interacts with ATG11 and ATG101. In terms of processing, phosphorylated during nutrient starvation. Dephosphorylated in nutrient-rich conditions.

The protein localises to the cytoplasmic vesicle. Its subcellular location is the autophagosome. In terms of biological role, involved in autophagy in a nutritional condition dependent manner. The ATG1-ATG13 protein kinase complex regulates downstream events required for autophagosome enclosure and/or vacuolar delivery. Becomes a target of autophagy under nutrient starvation. Connects autophagy to plant nutritional status. The protein is Autophagy-related protein 13a of Arabidopsis thaliana (Mouse-ear cress).